Reading from the N-terminus, the 426-residue chain is D-cysteine desulfhydrase 1, mitochondrial (426 aa).

Residues 1-63 (MARGAHQAPG…IGSFLSKRPY (63 aa)) constitute a mitochondrion transit peptide. Lys-119 carries the post-translational modification N6-(pyridoxal phosphate)lysine. Catalysis depends on Ser-146, which acts as the Nucleophile.

The protein belongs to the ACC deaminase/D-cysteine desulfhydrase family. In terms of assembly, homodimer. The cofactor is pyridoxal 5'-phosphate. Present in seeds (at protein level).

The protein localises to the mitochondrion. It catalyses the reaction D-cysteine + H2O = hydrogen sulfide + pyruvate + NH4(+) + H(+). With respect to regulation, inhibited by L-cysteine (L-cys). Functionally, catalyzes the production of hydrogen sulfide (H2S) from D-cysteine (D-cys). In Oryza sativa subsp. japonica (Rice), this protein is D-cysteine desulfhydrase 1, mitochondrial.